A 303-amino-acid chain; its full sequence is UDP-3-O-acyl-N-acetylglucosamine deacetylase (303 aa).

The Zn(2+) site is built by His78, His237, and Asp241. His264 serves as the catalytic Proton donor.

This sequence belongs to the LpxC family. Zn(2+) serves as cofactor.

It catalyses the reaction a UDP-3-O-[(3R)-3-hydroxyacyl]-N-acetyl-alpha-D-glucosamine + H2O = a UDP-3-O-[(3R)-3-hydroxyacyl]-alpha-D-glucosamine + acetate. The protein operates within glycolipid biosynthesis; lipid IV(A) biosynthesis; lipid IV(A) from (3R)-3-hydroxytetradecanoyl-[acyl-carrier-protein] and UDP-N-acetyl-alpha-D-glucosamine: step 2/6. In terms of biological role, catalyzes the hydrolysis of UDP-3-O-myristoyl-N-acetylglucosamine to form UDP-3-O-myristoylglucosamine and acetate, the committed step in lipid A biosynthesis. This Xanthomonas campestris pv. campestris (strain 8004) protein is UDP-3-O-acyl-N-acetylglucosamine deacetylase.